The sequence spans 136 residues: Large ribosomal subunit protein bL17 (136 aa).

Belongs to the bacterial ribosomal protein bL17 family. In terms of assembly, part of the 50S ribosomal subunit. Contacts protein L32.

The sequence is that of Large ribosomal subunit protein bL17 from Akkermansia muciniphila (strain ATCC BAA-835 / DSM 22959 / JCM 33894 / BCRC 81048 / CCUG 64013 / CIP 107961 / Muc).